The chain runs to 210 residues: Outer-membrane lipoprotein carrier protein (210 aa).

The signal sequence occupies residues Met-1–Ala-22.

This sequence belongs to the LolA family. In terms of assembly, monomer.

It localises to the periplasm. In terms of biological role, participates in the translocation of lipoproteins from the inner membrane to the outer membrane. Only forms a complex with a lipoprotein if the residue after the N-terminal Cys is not an aspartate (The Asp acts as a targeting signal to indicate that the lipoprotein should stay in the inner membrane). In Chromohalobacter salexigens (strain ATCC BAA-138 / DSM 3043 / CIP 106854 / NCIMB 13768 / 1H11), this protein is Outer-membrane lipoprotein carrier protein.